Reading from the N-terminus, the 188-residue chain is Ribosome-recycling factor (188 aa).

Belongs to the RRF family.

The protein localises to the cytoplasm. In terms of biological role, responsible for the release of ribosomes from messenger RNA at the termination of protein biosynthesis. May increase the efficiency of translation by recycling ribosomes from one round of translation to another. In Blochmanniella floridana, this protein is Ribosome-recycling factor.